We begin with the raw amino-acid sequence, 115 residues long: Mediator of RNA polymerase II transcription subunit 22 (115 aa).

It belongs to the Mediator complex subunit 22 family. Component of the Mediator complex.

Its subcellular location is the nucleus. In terms of biological role, component of the Mediator complex, a coactivator involved in the regulated transcription of nearly all RNA polymerase II-dependent genes. Mediator functions as a bridge to convey information from gene-specific regulatory proteins to the basal RNA polymerase II transcription machinery. Mediator is recruited to promoters by direct interactions with regulatory proteins and serves as a scaffold for the assembly of a functional preinitiation complex with RNA polymerase II and the general transcription factors. The polypeptide is Mediator of RNA polymerase II transcription subunit 22 (SRB6) (Candida albicans (strain SC5314 / ATCC MYA-2876) (Yeast)).